Reading from the N-terminus, the 115-residue chain is Cytochrome c (115 aa).

Positions 26, 29, 30, and 91 each coordinate heme c.

Belongs to the cytochrome c family. In terms of processing, binds 1 heme c group covalently per subunit.

It is found in the mitochondrion intermembrane space. Its function is as follows. Electron carrier protein. The oxidized form of the cytochrome c heme group can accept an electron from the heme group of the cytochrome c1 subunit of cytochrome reductase. Cytochrome c then transfers this electron to the cytochrome oxidase complex, the final protein carrier in the mitochondrial electron-transport chain. The sequence is that of Cytochrome c from Theileria annulata.